Consider the following 274-residue polypeptide: NH(3)-dependent NAD(+) synthetase (274 aa).

ATP is bound at residue 46-53 (GISGGQDS). Mg(2+) is bound at residue aspartate 52. Arginine 140 contacts deamido-NAD(+). Threonine 160 contacts ATP. Residue glutamate 165 participates in Mg(2+) binding. Residues lysine 173 and aspartate 180 each contribute to the deamido-NAD(+) site. Lysine 189 and threonine 211 together coordinate ATP. Position 260-261 (260-261 (HK)) interacts with deamido-NAD(+).

This sequence belongs to the NAD synthetase family. Homodimer.

It carries out the reaction deamido-NAD(+) + NH4(+) + ATP = AMP + diphosphate + NAD(+) + H(+). Its pathway is cofactor biosynthesis; NAD(+) biosynthesis; NAD(+) from deamido-NAD(+) (ammonia route): step 1/1. Functionally, catalyzes the ATP-dependent amidation of deamido-NAD to form NAD. Uses ammonia as a nitrogen source. This is NH(3)-dependent NAD(+) synthetase from Streptococcus pyogenes serotype M6 (strain ATCC BAA-946 / MGAS10394).